A 447-amino-acid polypeptide reads, in one-letter code: Serine/threonine-protein kinase NLK2 (447 aa).

In terms of domain architecture, Protein kinase spans 60–349; it reads PEPDRPIGYG…AKDALAHPYL (290 aa). Residues 66-74 and K89 contribute to the ATP site; that span reads IGYGAFGVV. The active-site Proton acceptor is D186.

Belongs to the protein kinase superfamily. CMGC Ser/Thr protein kinase family. MAP kinase subfamily. In terms of assembly, interacts with sox11, hmgxb4/hmg2l1, rnf138/narf, stat3.1 and mef2a. The cofactor is Mg(2+). In terms of tissue distribution, expressed widely in the ectoderm during early gastrula stage when neural induction is taking place. Expressed in the head region of neurula stage embryos. At the end of neurulation, expression becomes localized to the nervous system, and is restricted to the central nervous system, eye and head neural crest cells by the early tadpole stages.

It is found in the nucleus. The protein localises to the cytoplasm. The enzyme catalyses L-seryl-[protein] + ATP = O-phospho-L-seryl-[protein] + ADP + H(+). It catalyses the reaction L-threonyl-[protein] + ATP = O-phospho-L-threonyl-[protein] + ADP + H(+). Activated by tyrosine and threonine phosphorylation. Negatively regulates Wnt/beta-catenin-signaling during development. Plays a role together with sox11 in neural induction during early embryogenesis. Involved in TGFbeta-mediated mesoderm induction in early embryos, acting downstream of map3k7/tak1 to phosphorylate stat3.1. Augments the rnf138/narf-directed ubiquitination and degradation of tcf/lef by enhancing the association of rnf138/narf and tcf/lef. Phosphorylates mef2a to play a role in anterior neural development, including eye formation. The protein is Serine/threonine-protein kinase NLK2 (nlk.2) of Xenopus laevis (African clawed frog).